The following is a 111-amino-acid chain: X antigen family member 3 (111 aa).

The segment at 1 to 111 is disordered; the sequence is MIWRGRSTYR…PEGGDRQPQV (111 aa). The span at 29 to 40 shows a compositional bias: acidic residues; the sequence is PGDEEPQQEEPP. Residues 97 to 111 show a composition bias toward basic and acidic residues; it reads EQFKMPEGGDRQPQV.

Belongs to the GAGE family.

In Homo sapiens (Human), this protein is X antigen family member 3 (XAGE3).